A 118-amino-acid polypeptide reads, in one-letter code: UPF0102 protein Lxx14785 (118 aa).

The protein belongs to the UPF0102 family.

In Leifsonia xyli subsp. xyli (strain CTCB07), this protein is UPF0102 protein Lxx14785.